The chain runs to 415 residues: Putative FNIP repeat-containing protein L415 (415 aa).

The stretch at 148 to 185 is one FNIP repeat; the sequence is FIKKGAIPDSVTHLYFGSDYLSKDIIPKNVVYLRFGDF.

This Acanthamoeba polyphaga mimivirus (APMV) protein is Putative FNIP repeat-containing protein L415.